The chain runs to 179 residues: Large ribosomal subunit protein uL5 (179 aa).

The protein belongs to the universal ribosomal protein uL5 family. Part of the 50S ribosomal subunit; part of the 5S rRNA/L5/L18/L25 subcomplex. Contacts the 5S rRNA and the P site tRNA. Forms a bridge to the 30S subunit in the 70S ribosome.

This is one of the proteins that bind and probably mediate the attachment of the 5S RNA into the large ribosomal subunit, where it forms part of the central protuberance. In the 70S ribosome it contacts protein S13 of the 30S subunit (bridge B1b), connecting the 2 subunits; this bridge is implicated in subunit movement. Contacts the P site tRNA; the 5S rRNA and some of its associated proteins might help stabilize positioning of ribosome-bound tRNAs. This chain is Large ribosomal subunit protein uL5, found in Desulfitobacterium hafniense (strain Y51).